The chain runs to 148 residues: UPF0178 protein lpp0103 (148 aa).

This sequence belongs to the UPF0178 family.

The protein is UPF0178 protein lpp0103 of Legionella pneumophila (strain Paris).